The primary structure comprises 158 residues: Transcription elongation factor GreA (158 aa).

Residues 4-75 (EKTYPMTQEG…TQLENMIRNA (72 aa)) adopt a coiled-coil conformation.

The protein belongs to the GreA/GreB family.

In terms of biological role, necessary for efficient RNA polymerase transcription elongation past template-encoded arresting sites. The arresting sites in DNA have the property of trapping a certain fraction of elongating RNA polymerases that pass through, resulting in locked ternary complexes. Cleavage of the nascent transcript by cleavage factors such as GreA or GreB allows the resumption of elongation from the new 3'terminus. GreA releases sequences of 2 to 3 nucleotides. The polypeptide is Transcription elongation factor GreA (Bacillus cereus (strain ATCC 10987 / NRS 248)).